Reading from the N-terminus, the 431-residue chain is 3-phosphoshikimate 1-carboxyvinyltransferase (431 aa).

Residues Lys-26, Ser-27, and Arg-31 each contribute to the 3-phosphoshikimate site. Lys-26 lines the phosphoenolpyruvate pocket. Residues Gly-99 and Arg-127 each coordinate phosphoenolpyruvate. 3-phosphoshikimate is bound by residues Ser-170, Ser-171, Gln-172, Ser-199, Glu-314, and His-343. Gln-172 is a binding site for phosphoenolpyruvate. The Proton acceptor role is filled by Glu-314. The phosphoenolpyruvate site is built by Arg-347, Arg-388, and Lys-413.

Belongs to the EPSP synthase family. As to quaternary structure, monomer.

The protein resides in the cytoplasm. It carries out the reaction 3-phosphoshikimate + phosphoenolpyruvate = 5-O-(1-carboxyvinyl)-3-phosphoshikimate + phosphate. It functions in the pathway metabolic intermediate biosynthesis; chorismate biosynthesis; chorismate from D-erythrose 4-phosphate and phosphoenolpyruvate: step 6/7. In terms of biological role, catalyzes the transfer of the enolpyruvyl moiety of phosphoenolpyruvate (PEP) to the 5-hydroxyl of shikimate-3-phosphate (S3P) to produce enolpyruvyl shikimate-3-phosphate and inorganic phosphate. This chain is 3-phosphoshikimate 1-carboxyvinyltransferase, found in Mycobacterium marinum (strain ATCC BAA-535 / M).